Consider the following 212-residue polypeptide: tRNA(Phe) 7-((3-amino-3-carboxypropyl)-4-demethylwyosine(37)-N(4))-methyltransferase 2 (212 aa).

It belongs to the TYW3 family.

It catalyses the reaction 4-demethyl-7-[(3S)-3-amino-3-carboxypropyl]wyosine(37) in tRNA(Phe) + S-adenosyl-L-methionine = 7-[(3S)-3-amino-3-carboxypropyl]wyosine(37) in tRNA(Phe) + S-adenosyl-L-homocysteine + H(+). S-adenosyl-L-methionine-dependent methyltransferase that acts as a component of the wyosine derivatives biosynthesis pathway. Probably methylates N-4 position of wybutosine-86 to produce wybutosine-72. This chain is tRNA(Phe) 7-((3-amino-3-carboxypropyl)-4-demethylwyosine(37)-N(4))-methyltransferase 2, found in Thermococcus kodakarensis (strain ATCC BAA-918 / JCM 12380 / KOD1) (Pyrococcus kodakaraensis (strain KOD1)).